The following is a 306-amino-acid chain: OVARIAN TUMOR DOMAIN-containing deubiquitinating enzyme 1 (306 aa).

An OTU domain is found at 81–295 (IGIRRTRGDG…PGHYDILYPK (215 aa)). The active site involves D89. C92 serves as the catalytic Nucleophile. Active-site residues include H259 and H288.

The protein belongs to the peptidase C65 family.

The catalysed reaction is Thiol-dependent hydrolysis of ester, thioester, amide, peptide and isopeptide bonds formed by the C-terminal Gly of ubiquitin (a 76-residue protein attached to proteins as an intracellular targeting signal).. With respect to regulation, cleavage activities for 'Lys-48'- and 'Lys-63'-linked ubiquitin (UB) tetramers is inhibited by UB aldehyde and N-ethylmaleimide but not by the metalloprotease inhibitors 1,10-phenanthroline and EDTA, and the serine protease inhibitor phenylmethylsulfonyl fluoride. Functionally, hydrolase that can remove conjugated ubiquitin from proteins in vitro and may therefore play an important regulatory role at the level of protein turnover by preventing degradation. Cysteine protease with a preference for Met-1 and 'Lys-48' over 'Lys-63'-linked ubiquitin (UB) tetramers (e.g. Ub2, Ub3 and Ub4) as substrates. The polypeptide is OVARIAN TUMOR DOMAIN-containing deubiquitinating enzyme 1 (Arabidopsis thaliana (Mouse-ear cress)).